The sequence spans 162 residues: tRNA-specific adenosine deaminase (162 aa).

A CMP/dCMP-type deaminase domain is found at 3–115 (DSDKYFMKCA…KNLQKYICCK (113 aa)). Residue histidine 54 coordinates Zn(2+). Catalysis depends on glutamate 56, which acts as the Proton donor. Residues cysteine 84 and cysteine 87 each coordinate Zn(2+).

This sequence belongs to the cytidine and deoxycytidylate deaminase family. In terms of assembly, homodimer. Zn(2+) is required as a cofactor.

The enzyme catalyses adenosine(34) in tRNA + H2O + H(+) = inosine(34) in tRNA + NH4(+). In terms of biological role, catalyzes the deamination of adenosine to inosine at the wobble position 34 of tRNA(Arg2). The chain is tRNA-specific adenosine deaminase from Buchnera aphidicola subsp. Baizongia pistaciae (strain Bp).